The primary structure comprises 64 residues: Sulfur carrier protein ThiS (64 aa).

Gly-64 carries the post-translational modification 1-thioglycine; alternate. A Glycyl adenylate; alternate modification is found at Gly-64. A Glycyl cysteine thioester (Gly-Cys) (interchain with C-192 in TtuC); alternate cross-link involves residue Gly-64.

This sequence belongs to the sulfur carrier protein ThiS family. Post-translationally, C-terminal thiocarboxylation occurs in 2 steps, it is first acyl-adenylated (-COAMP) by TtuC, then thiocarboxylated (-COSH) by the cysteine desulfurases IscS or SufS.

Its pathway is cofactor biosynthesis; thiamine diphosphate biosynthesis. Its function is as follows. Is the sulfur donor in the synthesis of the thiazole phosphate moiety of thiamine phosphate. The sequence is that of Sulfur carrier protein ThiS from Thermus thermophilus (strain ATCC BAA-163 / DSM 7039 / HB27).